We begin with the raw amino-acid sequence, 251 residues long: Triosephosphate isomerase (251 aa).

9 to 11 (NWK) serves as a coordination point for substrate. H95 functions as the Electrophile in the catalytic mechanism. The Proton acceptor role is filled by E167. Residues G173, S212, and 233-234 (GG) each bind substrate.

This sequence belongs to the triosephosphate isomerase family. In terms of assembly, homodimer.

Its subcellular location is the cytoplasm. The enzyme catalyses D-glyceraldehyde 3-phosphate = dihydroxyacetone phosphate. The protein operates within carbohydrate biosynthesis; gluconeogenesis. It participates in carbohydrate degradation; glycolysis; D-glyceraldehyde 3-phosphate from glycerone phosphate: step 1/1. Involved in the gluconeogenesis. Catalyzes stereospecifically the conversion of dihydroxyacetone phosphate (DHAP) to D-glyceraldehyde-3-phosphate (G3P). This chain is Triosephosphate isomerase, found in Pseudomonas fluorescens (strain ATCC BAA-477 / NRRL B-23932 / Pf-5).